The chain runs to 468 residues: MPPKKHSGFMMFVNEWRDNNPEGRNLSIAQAVSRCGSIWEKMTAQQRGPYNSGAKNADVLTRVKKERLNCHGQVLSQVELEEREMAESQIHMKRCTERIVMDAKRSHDLENTKFVFVAFNYFTKAFTTDVYVPAEFSASEYSFNEGIMSVYSTLIDPGQIIFGQGSDAQHHSSTTHNLPLPPNALGEKNMGKLYRNILEYLSKIQEGKDATKPFVVFTKTDMVPFVKSCFRYLACENQDGSYENGDQIQVLDIQYLLFIQKKEVLDIAGVSDEKINLYVTDAYFLKDFFEFTPEISCQYHEENDRSKYCTQSLVMRWAYTFSDYMCSDLAISVQPGKHIPPKTKPNYRVIPANSSVHESSFDSFYSIPASCEKKEDSPTVLSPASSRRSLASSPYVPTDHTSFVGDLNKKDEFPSLDQRNKLAALIDLIQFFYRCPVQLCRPLFSAGYHLNDALEPPHDPRDLYGRPL.

Positions P2–N69 form a DNA-binding region, HMG box. The segment at K374–S393 is disordered. Residues L381–S393 show a composition bias toward low complexity.

Belongs to the maelstrom family.

The protein resides in the cytoplasm. The protein localises to the nucleus. Its function is as follows. Involved both in the piRNA and miRNA metabolic processes. As a component of the meiotic nuage, plays a central role during oogenesis by repressing transposable elements and preventing their mobilization, which is essential for the germline integrity. Repression of transposable elements is mediated via the piRNA metabolic process, which mediates the repression of transposable elements during meiosis by forming complexes composed of piRNAs and Piwi proteins and governs the repression of transposons. As a nuclear component, it is required for proper differentiation in the germline stem cell (GSC) lineage by repressing microRNA-7 (miR-7), thereby acting as an indirect regulator of bag-of-marbles (Bam). Acts by binding to the promoter of miR-7 gene and repressing its expression; miR-7 repression alleviates the Bam repression by miR-7, thereby allowing differentiation in the germline stem cell (GSC) lineage. The chain is Protein maelstrom 2 (mael2) from Drosophila ananassae (Fruit fly).